A 295-amino-acid chain; its full sequence is Probable protein phosphatase 2C 54 (295 aa).

Residues 78 to 289 enclose the PPM-type phosphatase domain; that stretch reads GHGVVSVMGR…ENINVIVIDL (212 aa). Residues D112, G113, D228, and E280 each contribute to the Mn(2+) site.

It belongs to the PP2C family. Mg(2+) serves as cofactor. It depends on Mn(2+) as a cofactor.

It catalyses the reaction O-phospho-L-seryl-[protein] + H2O = L-seryl-[protein] + phosphate. It carries out the reaction O-phospho-L-threonyl-[protein] + H2O = L-threonyl-[protein] + phosphate. In Arabidopsis thaliana (Mouse-ear cress), this protein is Probable protein phosphatase 2C 54.